Reading from the N-terminus, the 459-residue chain is Exodeoxyribonuclease 7 large subunit (459 aa).

Belongs to the XseA family. As to quaternary structure, heterooligomer composed of large and small subunits.

Its subcellular location is the cytoplasm. The catalysed reaction is Exonucleolytic cleavage in either 5'- to 3'- or 3'- to 5'-direction to yield nucleoside 5'-phosphates.. Its function is as follows. Bidirectionally degrades single-stranded DNA into large acid-insoluble oligonucleotides, which are then degraded further into small acid-soluble oligonucleotides. This Pseudomonas fluorescens (strain Pf0-1) protein is Exodeoxyribonuclease 7 large subunit.